The sequence spans 706 residues: Sodium- and chloride-dependent glycine transporter 1 (706 aa).

Residues 1 to 26 are disordered; the sequence is MSGGDTRAAIARPRMAAAHGPVAPSS. Residues 1-108 are Cytoplasmic-facing; that stretch reads MSGGDTRAAI…KRGNWGNQIE (108 aa). Low complexity predominate over residues 7–18; sequence RAAIARPRMAAA. The next 3 helical transmembrane spans lie at 109–129, 136–156, and 188–208; these read FVLTSVGYAVGLGNVWRFPYL, GAFMFPYFIMLIFCGIPLFFM, and VSTYIGIYYNVVICIAFYYFF. Topologically, residues 209–285 are extracellular; the sequence is SSMTHVLPWA…LSDDIGNFGE (77 aa). The next 9 helical transmembrane spans lie at 286 to 306, 315 to 335, 360 to 380, 407 to 427, 450 to 470, 506 to 526, 530 to 550, 570 to 590, and 610 to 630; these read VRLPLLGCLGVSWLVVFLCLI, VVYFTATFPYVVLTILFVRGV, VWGDAASQIFYSLGCAWGGLI, SVYAGFVIFSILGFMANHLGV, LLPISPLWSLLFFFMLILLGL, VAGFLLGIPLTSQAGIYWLLL, YAASFSLVVISCIMCVAIMYI, LFFQICWRFVSPAIIFFILVF, and VAIGFLMALSSVLCIPLYAMF. Over 631-706 the chain is Cytoplasmic; the sequence is RLCRTDGDTL…GSSRLQDSRI (76 aa). A phosphoserine mark is found at S673 and S698. The segment at 695–706 is essential for interaction with EXOC1; it reads SNGSSRLQDSRI.

The protein belongs to the sodium:neurotransmitter symporter (SNF) (TC 2.A.22) family. SLC6A9 subfamily. In terms of assembly, interacts with EXOC1; interaction increases the transporter capacity of SLC6A9 probably by promoting its insertion into the cell membrane. Interacts with EXOC3 and EXOC4. As to expression, expressed in the brain, kidney, pancreas, lung, placenta and liver. In terms of tissue distribution, expressed only in the brain.

The protein localises to the cell membrane. It catalyses the reaction glycine(out) + chloride(out) + 2 Na(+)(out) = glycine(in) + chloride(in) + 2 Na(+)(in). Inhibited by sarcosine. Sodium- and chloride-dependent glycine transporter. Essential for regulating glycine concentrations at inhibitory glycinergic synapses. Functionally, sodium- and chloride-dependent glycine transporter. The chain is Sodium- and chloride-dependent glycine transporter 1 (SLC6A9) from Homo sapiens (Human).